The following is a 73-amino-acid chain: Translation initiation factor IF-1 (73 aa).

Residues 1–73 (MAKKDGVIEI…TRGRIVYRYK (73 aa)) enclose the S1-like domain.

Belongs to the IF-1 family. As to quaternary structure, component of the 30S ribosomal translation pre-initiation complex which assembles on the 30S ribosome in the order IF-2 and IF-3, IF-1 and N-formylmethionyl-tRNA(fMet); mRNA recruitment can occur at any time during PIC assembly.

It localises to the cytoplasm. In terms of biological role, one of the essential components for the initiation of protein synthesis. Stabilizes the binding of IF-2 and IF-3 on the 30S subunit to which N-formylmethionyl-tRNA(fMet) subsequently binds. Helps modulate mRNA selection, yielding the 30S pre-initiation complex (PIC). Upon addition of the 50S ribosomal subunit IF-1, IF-2 and IF-3 are released leaving the mature 70S translation initiation complex. The polypeptide is Translation initiation factor IF-1 (Arthrobacter sp. (strain FB24)).